Reading from the N-terminus, the 1088-residue chain is Receptor-type guanylate cyclase gcy-17 (1088 aa).

The N-terminal stretch at Met-1–Ala-20 is a signal peptide. At Arg-21–Val-480 the chain is on the extracellular side. Asn-33, Asn-235, Asn-251, Asn-321, Asn-381, Asn-419, and Asn-434 each carry an N-linked (GlcNAc...) asparagine glycan. The helical transmembrane segment at Ile-481–Phe-501 threads the bilayer. The Cytoplasmic segment spans residues Tyr-502–Ile-1088. The disordered stretch occupies residues Ser-529 to Thr-552. A compositionally biased stretch (polar residues) spans Glu-535–Thr-552. The 290-residue stretch at Glu-535–Asn-824 folds into the Protein kinase domain. A coiled-coil region spans residues Leu-826 to Leu-854. The 131-residue stretch at Thr-882–Glu-1012 folds into the Guanylate cyclase domain. Residues Ser-1069–Ile-1088 are disordered.

It belongs to the adenylyl cyclase class-4/guanylyl cyclase family. As to expression, expressed in PHA sensory neurons.

The protein localises to the cell membrane. The enzyme catalyses GTP = 3',5'-cyclic GMP + diphosphate. Functionally, guanylate cyclase involved in the production of the second messenger cGMP. The polypeptide is Receptor-type guanylate cyclase gcy-17 (Caenorhabditis elegans).